A 787-amino-acid chain; its full sequence is Alpha-glucosidase 2 (787 aa).

Active-site residues include Asp-407 and Glu-410. Asp-484 acts as the Proton donor in catalysis.

Belongs to the glycosyl hydrolase 31 family. As to quaternary structure, homohexamer.

The enzyme catalyses Hydrolysis of terminal, non-reducing (1-&gt;4)-linked alpha-D-glucose residues with release of alpha-D-glucose.. This is Alpha-glucosidase 2 from Bacillus thermoamyloliquefaciens.